Consider the following 664-residue polypeptide: DNA ligase (664 aa).

NAD(+) is bound by residues 32–36 (DKEYD) and 80–81 (SL). The N6-AMP-lysine intermediate role is filled by Lys-122. Positions 144, 178, and 314 each coordinate NAD(+). Residues Cys-407, Cys-410, Cys-423, and Cys-429 each coordinate Zn(2+). In terms of domain architecture, BRCT spans 587-664 (IDENPFMGKT…NEEEFSNKIK (78 aa)).

It belongs to the NAD-dependent DNA ligase family. LigA subfamily. Requires Mg(2+) as cofactor. Mn(2+) serves as cofactor.

It catalyses the reaction NAD(+) + (deoxyribonucleotide)n-3'-hydroxyl + 5'-phospho-(deoxyribonucleotide)m = (deoxyribonucleotide)n+m + AMP + beta-nicotinamide D-nucleotide.. In terms of biological role, DNA ligase that catalyzes the formation of phosphodiester linkages between 5'-phosphoryl and 3'-hydroxyl groups in double-stranded DNA using NAD as a coenzyme and as the energy source for the reaction. It is essential for DNA replication and repair of damaged DNA. The protein is DNA ligase of Clostridium botulinum (strain 657 / Type Ba4).